The primary structure comprises 344 residues: Glycerol-3-phosphate dehydrogenase [NAD(P)+] (344 aa).

Ser-18, Tyr-19, His-39, and Lys-113 together coordinate NADPH. Residues Lys-113, Gly-142, and Thr-144 each coordinate sn-glycerol 3-phosphate. NADPH is bound at residue Ala-146. The sn-glycerol 3-phosphate site is built by Lys-198, Asp-251, Ser-261, Arg-262, and Asn-263. Lys-198 functions as the Proton acceptor in the catalytic mechanism. Arg-262 contributes to the NADPH binding site. NADPH is bound by residues Ile-286 and Glu-288.

Belongs to the NAD-dependent glycerol-3-phosphate dehydrogenase family.

Its subcellular location is the cytoplasm. It carries out the reaction sn-glycerol 3-phosphate + NAD(+) = dihydroxyacetone phosphate + NADH + H(+). It catalyses the reaction sn-glycerol 3-phosphate + NADP(+) = dihydroxyacetone phosphate + NADPH + H(+). It participates in membrane lipid metabolism; glycerophospholipid metabolism. Its function is as follows. Catalyzes the reduction of the glycolytic intermediate dihydroxyacetone phosphate (DHAP) to sn-glycerol 3-phosphate (G3P), the key precursor for phospholipid synthesis. This chain is Glycerol-3-phosphate dehydrogenase [NAD(P)+], found in Blochmanniella pennsylvanica (strain BPEN).